Reading from the N-terminus, the 407-residue chain is MAKEKFERNKPHVNVGTIGHVDHGKTTLTAALTRVCSEVWGGAAVAFDGIDNAPEERERGITIATSHVEYDSPIRHYAHVDCPGHADYVKNMITGAAQMDGAILVCGSTDGPMPQTREHILLSRQVGVPYIVVFLNKADLLAEDCGGVDSEEYAEMMELVEMELRELLDTYEFPGDDTPIIAGSALMALNGEDENELGTTAVKKLVEALDSYIPEPERAIDQPFLMPVEDVFSISGRGTVVTGRVERGIVKVGEELEIVGIRDTTKTTCTGVEMFRKLLDEGRAGENVGVLLRGTKRDDVERGQVLSKPGSVTPHTTFQSEIYVLSKDEGGRHTPFFKGYRPQFYFRTTDVTGACELPEGVEMVMPGDNVQMTVTLIAPIAMEEGLRFAIREGGRTVGAGVVAKIIA.

The region spanning Lys-10 to Glu-217 is the tr-type G domain. A G1 region spans residues Gly-19–Thr-26. Residue Gly-19–Thr-26 participates in GTP binding. Thr-26 is a binding site for Mg(2+). Residues Gly-60–Ala-64 form a G2 region. A G3 region spans residues Asp-81 to Gly-84. Residues Asp-81–His-85 and Asn-136–Asp-139 each bind GTP. Residues Asn-136–Asp-139 are G4. Residues Ser-184–Leu-186 are G5.

It belongs to the TRAFAC class translation factor GTPase superfamily. Classic translation factor GTPase family. EF-Tu/EF-1A subfamily. In terms of assembly, monomer.

It localises to the cytoplasm. It carries out the reaction GTP + H2O = GDP + phosphate + H(+). GTP hydrolase that promotes the GTP-dependent binding of aminoacyl-tRNA to the A-site of ribosomes during protein biosynthesis. In Saccharophagus degradans (strain 2-40 / ATCC 43961 / DSM 17024), this protein is Elongation factor Tu.